Reading from the N-terminus, the 258-residue chain is Tryptophan synthase alpha chain (258 aa).

Catalysis depends on proton acceptor residues E47 and D58.

It belongs to the TrpA family. As to quaternary structure, tetramer of two alpha and two beta chains.

The enzyme catalyses (1S,2R)-1-C-(indol-3-yl)glycerol 3-phosphate + L-serine = D-glyceraldehyde 3-phosphate + L-tryptophan + H2O. The protein operates within amino-acid biosynthesis; L-tryptophan biosynthesis; L-tryptophan from chorismate: step 5/5. In terms of biological role, the alpha subunit is responsible for the aldol cleavage of indoleglycerol phosphate to indole and glyceraldehyde 3-phosphate. The sequence is that of Tryptophan synthase alpha chain from Bacillus cereus (strain B4264).